The chain runs to 598 residues: Transcription factor himD (598 aa).

Positions 18 to 47 (CQNCARAKIRCIRSVPTGSCDRCERLRKTC) form a DNA-binding region, zn(2)-C6 fungal-type. A disordered region spans residues 87–110 (TVSEASIDDKSPTTTPTTPRPPPD).

The protein localises to the nucleus. Transcription factor that, with himB, probably co-regulates the him gene cluster that mediates the biosynthesis of himeic acid A, a ubiquitin-activating enzyme (E1) inhibitor. This Aspergillus japonicus protein is Transcription factor himD.